A 1481-amino-acid chain; its full sequence is Cystic fibrosis transmembrane conductance regulator (1481 aa).

Over 1–77 (MQRSPLEKAS…KLINALRRCF (77 aa)) the chain is Cytoplasmic. The helical transmembrane segment at 78 to 98 (FWRFMFYGIILYLGEVTKAVQ) threads the bilayer. In terms of domain architecture, ABC transmembrane type-1 1 spans 81–365 (FMFYGIILYL…WAVQTWYDSL (285 aa)). Over 99 to 122 (PLLLGRIIASYDPDNKAERSIAIY) the chain is Extracellular. The helical transmembrane segment at 123–146 (LGIGLCLLFIVRTLLLHPAIFGLH) threads the bilayer. Over 147 to 195 (HIGMQMRIAMFSLIYKKTLKLSSRVLDKISIGQLVSLLSNNLNKFDEGL) the chain is Cytoplasmic. A helical membrane pass occupies residues 196–216 (ALAHFVWIAPLQVTLLMGLLW). Over 217-222 (ELLQAF) the chain is Extracellular. A helical transmembrane segment spans residues 223-243 (TFCGLAFLVVLAFLQAGLGKM). Residues 244–298 (MMKYRDQRAGKINERLVITSEIIENIQSVKAYCWEEAMEKIIENLRQTELKLTRK) are Cytoplasmic-facing. The helical transmembrane segment at 299 to 319 (AAYVRYLNSSAFFFSGFFVVF) threads the bilayer. At 320–339 (LSVLPYALLKGIILRKIFTT) the chain is on the extracellular side. Residues 340–358 (ISFCIVLRMAVTRQFPWAV) traverse the membrane as a helical segment. At 359–858 (QTWYDSLGAI…YLRYITVHKS (500 aa)) the chain is on the cytoplasmic side. ATP contacts are provided by residues tryptophan 401, 457–464 (GSTGAGKT), and glutamine 492. Residues 423–645 (NGDNNLFFSN…RPDFSSKLMG (223 aa)) enclose the ABC transporter 1 domain. Cysteine 523 carries the S-palmitoyl cysteine lipid modification. Serine 548 and serine 659 each carry phosphoserine. Residues 653–831 (TAERRNSIIT…EEINEEDLRD (179 aa)) form a disordered R region region. Serine 669 carries the phosphoserine; by PKA modification. Position 685 is a phosphoserine (serine 685). Lysine 687 participates in a covalent cross-link: Glycyl lysine isopeptide (Lys-Gly) (interchain with G-Cter in ubiquitin). Residues serine 699 and serine 711 each carry the phosphoserine modification. Threonine 716 is subject to Phosphothreonine. Phosphoserine is present on residues serine 736, serine 767, serine 790, serine 795, and serine 813. A helical transmembrane segment spans residues 859-879 (LMFVLIWCLVVFLAEVAASLV). Positions 859–1155 (LMFVLIWCLV…AVNSSIDVDS (297 aa)) constitute an ABC transmembrane type-1 2 domain. The Extracellular segment spans residues 880–918 (VLCLFPKILFQDKGNSTKSANNSYAVIITSTSSYYIFYI). N-linked (GlcNAc...) asparagine glycans are attached at residues asparagine 894 and asparagine 900. The discontinuously helical transmembrane segment at 919–939 (YVGVADTLLALGLFRGLPLVH) threads the bilayer. The Cytoplasmic segment spans residues 940–990 (TLITVSKTLHHKMLQSVLQAPMSTLNTLKTGGILNRFSKDIAVLDDLLPLT). A helical membrane pass occupies residues 991-1011 (IFDFVQLLLIVIGAVVVVSVL). Topologically, residues 1012 to 1013 (QP) are extracellular. Residues 1014 to 1034 (YIFLATVPVIAAFILLRAYFL) form a helical membrane-spanning segment. Residues 1035-1095 (HTSQQLKQLE…TANWFLYLST (61 aa)) lie on the Cytoplasmic side of the membrane. Residues 1096-1116 (LRWFQMRIEMIFVIFFIAVTF) traverse the membrane as a helical segment. Residues 1117–1130 (ISILTTGEGEGRVG) lie on the Extracellular side of the membrane. A helical membrane pass occupies residues 1131-1151 (IILTLAMNIMGTLQWAVNSSI). Residues 1152-1481 (DVDSLMRSVS…TEEEVQETKI (330 aa)) lie on the Cytoplasmic side of the membrane. The ABC transporter 2 domain maps to 1211-1444 (MTVKDLTAKY…KSLFRQAISP (234 aa)). ATP-binding positions include tyrosine 1220 and 1245–1252 (GRTGSGKS). An interaction with GORASP2 region spans residues 1387 to 1481 (RTLKQAFADC…TEEEVQETKI (95 aa)). Cysteine 1396 carries S-palmitoyl cysteine lipidation. Residues 1452-1481 (PQRNSSRQKSRSNIAALKEETEEEVQETKI) are disordered. The span at 1453–1464 (QRNSSRQKSRSN) shows a compositional bias: low complexity. Serine 1457 bears the Phosphoserine mark. Positions 1471 to 1481 (ETEEEVQETKI) are enriched in acidic residues. Residues 1479–1481 (TKI) carry the PDZ-binding motif.

Belongs to the ABC transporter superfamily. ABCC family. CFTR transporter (TC 3.A.1.202) subfamily. As to quaternary structure, monomer; does not require oligomerization for channel activity. May form oligomers in the membrane. Interacts with SLC26A3, SLC26A6 and NHERF1. Interacts with SHANK2. Interacts with MYO6. Interacts (via C-terminus) with GOPC (via PDZ domain); this promotes CFTR internalization and thereby decreases channel activity. Interacts with SLC4A7 through NHERF1. Found in a complex with MYO5B and RAB11A. Interacts with ANO1. Interacts with SLC26A8. Interacts with AHCYL1; the interaction increases CFTR activity. Interacts with CSE1L. The core-glycosylated form interacts with GORASP2 (via PDZ GRASP-type 1 domain) in respone to ER stress. Interacts with MARCHF2; the interaction leads to CFTR ubiqtuitination and degradation. Interacts with ADGRG2. Post-translationally, N-glycosylated. Phosphorylated; cAMP treatment promotes phosphorylation and activates the channel. Dephosphorylation decreases the ATPase activity (in vitro). Phosphorylation at PKA sites activates the channel. Phosphorylation at PKC sites enhances the response to phosphorylation by PKA. Phosphorylated by AMPK; this inhibits channel activity. In terms of processing, ubiquitinated, leading to its degradation in the lysosome. Deubiquitination by USP10 in early endosomes enhances its endocytic recycling to the cell membrane. Ubiquitinated by RNF185 during ER stress. Ubiquitinated by MARCHF2.

The protein localises to the apical cell membrane. Its subcellular location is the early endosome membrane. The protein resides in the cell membrane. It is found in the recycling endosome membrane. It localises to the endoplasmic reticulum membrane. The protein localises to the nucleus. It catalyses the reaction ATP + H2O + closed Cl(-) channel = ADP + phosphate + open Cl(-) channel.. The catalysed reaction is chloride(in) = chloride(out). It carries out the reaction hydrogencarbonate(in) = hydrogencarbonate(out). The enzyme catalyses ATP + H2O = ADP + phosphate + H(+). Its function is as follows. Epithelial ion channel that plays an important role in the regulation of epithelial ion and water transport and fluid homeostasis. Mediates the transport of chloride ions across the cell membrane. Possesses an intrinsic ATPase activity and utilizes ATP to gate its channel; the passive flow of anions through the channel is gated by cycles of ATP binding and hydrolysis by the ATP-binding domains. The ion channel is also permeable to HCO(3)(-); selectivity depends on the extracellular chloride concentration. Exerts its function also by modulating the activity of other ion channels and transporters. Contributes to the regulation of the pH and the ion content of the epithelial fluid layer. Modulates the activity of the epithelial sodium channel (ENaC) complex, in part by regulating the cell surface expression of the ENaC complex. May regulate bicarbonate secretion and salvage in epithelial cells by regulating the transporter SLC4A7. Can inhibit the chloride channel activity of ANO1. Plays a role in the chloride and bicarbonate homeostasis during sperm epididymal maturation and capacitation. This chain is Cystic fibrosis transmembrane conductance regulator, found in Muntiacus reevesi (Reeves' muntjac).